The primary structure comprises 69 residues: Putative membrane protein insertion efficiency factor (69 aa).

Belongs to the UPF0161 family.

The protein resides in the cell inner membrane. In terms of biological role, could be involved in insertion of integral membrane proteins into the membrane. The polypeptide is Putative membrane protein insertion efficiency factor (Nitrosomonas europaea (strain ATCC 19718 / CIP 103999 / KCTC 2705 / NBRC 14298)).